The chain runs to 271 residues: Glutamate racemase (271 aa).

Substrate is bound by residues 12–13 (DS) and 44–45 (YG). Cysteine 75 serves as the catalytic Proton donor/acceptor. Residue 76 to 77 (NT) participates in substrate binding. Cysteine 185 serves as the catalytic Proton donor/acceptor. A substrate-binding site is contributed by 186–187 (TH).

This sequence belongs to the aspartate/glutamate racemases family.

The catalysed reaction is L-glutamate = D-glutamate. It participates in cell wall biogenesis; peptidoglycan biosynthesis. Provides the (R)-glutamate required for cell wall biosynthesis. This is Glutamate racemase from Mycobacterium marinum (strain ATCC BAA-535 / M).